The sequence spans 126 residues: FCS-Like Zinc finger 7 (126 aa).

Residues 72 to 116 (SFLVNCGFCKRGLAPGRDIYMYKGDAAFCSIECREQQMEHDEGKT) form an FLZ-type zinc finger.

Belongs to the FLZ family. Interacts with KIN10 and KIN11 via its FLZ-type zinc finger domain. Interacts with KINB3 via its N-terminal part. Forms homodimer and heterodimer with FLZ1, FLZ2 and FLZ15 in vitro.

The protein localises to the cytoplasm. Its subcellular location is the nucleus. Functionally, may act as an adapter to facilitate the interaction of SnRK1 complex with effector proteins, conferring tissue- and stimulus-type specific differences in the SnRK1 regulation pathway. In Arabidopsis thaliana (Mouse-ear cress), this protein is FCS-Like Zinc finger 7.